The sequence spans 274 residues: Large ribosomal subunit protein uL2cz (274 aa).

Disordered stretches follow at residues 1–25 (MAIH…VKSN) and 224–274 (NPVD…RRSK). Positions 7–25 (KTSTPSTRNGTVDSQVKSN) are enriched in polar residues.

It belongs to the universal ribosomal protein uL2 family. Part of the 50S ribosomal subunit.

It is found in the plastid. Its subcellular location is the chloroplast. In Atropa belladonna (Belladonna), this protein is Large ribosomal subunit protein uL2cz (rpl2-A).